Consider the following 559-residue polypeptide: Formate--tetrahydrofolate ligase (559 aa).

Thr-68 to Ser-75 contributes to the ATP binding site.

Belongs to the formate--tetrahydrofolate ligase family.

It carries out the reaction (6S)-5,6,7,8-tetrahydrofolate + formate + ATP = (6R)-10-formyltetrahydrofolate + ADP + phosphate. It participates in one-carbon metabolism; tetrahydrofolate interconversion. The sequence is that of Formate--tetrahydrofolate ligase from Clostridium tetani (strain Massachusetts / E88).